The following is a 103-amino-acid chain: UPF0145 protein BC_5181 (103 aa).

The protein belongs to the UPF0145 family.

The sequence is that of UPF0145 protein BC_5181 from Bacillus cereus (strain ATCC 14579 / DSM 31 / CCUG 7414 / JCM 2152 / NBRC 15305 / NCIMB 9373 / NCTC 2599 / NRRL B-3711).